The following is a 154-amino-acid chain: MGISYSVDVDPDETAKAMLRERHMSHKHSKEIAREIKGKTAGEAVDYLEAVIDGDRSVPFKSHNTGVGHRNDIEGWDAGRYPEKASEAFLDLLENGINNADHQGFEGEEMVIEHVAAHKVGESPGQKPRAFGRASPWNTPQVDVELVLRTEDDE.

This sequence belongs to the universal ribosomal protein uL22 family. In terms of assembly, part of the 50S ribosomal subunit.

Its function is as follows. This protein binds specifically to 23S rRNA. It makes multiple contacts with different domains of the 23S rRNA in the assembled 50S subunit and ribosome. In terms of biological role, the globular domain of the protein is located near the polypeptide exit tunnel on the outside of the subunit, while an extended beta-hairpin is found that lines the wall of the exit tunnel in the center of the 70S ribosome. This chain is Large ribosomal subunit protein uL22, found in Natronomonas pharaonis (strain ATCC 35678 / DSM 2160 / CIP 103997 / JCM 8858 / NBRC 14720 / NCIMB 2260 / Gabara) (Halobacterium pharaonis).